A 156-amino-acid chain; its full sequence is Small ribosomal subunit protein uS7 (156 aa).

The protein belongs to the universal ribosomal protein uS7 family. As to quaternary structure, part of the 30S ribosomal subunit. Contacts proteins S9 and S11.

Its function is as follows. One of the primary rRNA binding proteins, it binds directly to 16S rRNA where it nucleates assembly of the head domain of the 30S subunit. Is located at the subunit interface close to the decoding center, probably blocks exit of the E-site tRNA. This chain is Small ribosomal subunit protein uS7, found in Clostridium perfringens (strain ATCC 13124 / DSM 756 / JCM 1290 / NCIMB 6125 / NCTC 8237 / Type A).